The sequence spans 59 residues: UPF0337 protein PP_4561 (59 aa).

Basic and acidic residues predominate over residues 27–43; the sequence is TDNEKLRAEGKAQELKG. The interval 27-59 is disordered; the sequence is TDNEKLRAEGKAQELKGEAQQVKGNVKDAVKKP.

The protein belongs to the UPF0337 (CsbD) family.

In Pseudomonas putida (strain ATCC 47054 / DSM 6125 / CFBP 8728 / NCIMB 11950 / KT2440), this protein is UPF0337 protein PP_4561.